Here is a 310-residue protein sequence, read N- to C-terminus: MAAAGARHYTSKDGSQHDLVRGIWKLLRLHTPEGLSTASIGWLALFFYAIQQQLSFESLRYTFLGIFACYQITHGVFCMWNDICDRDFDAQVARTKKRPLPSGMVTYTEAMVAFIIGLALSLGVTYAMLGEDVTLTMGPIWGLSFIYPLCKRAIWAPQAVLGLTMAACVLPPWVALGNDATNAKLPASLFGAIFSWLVYLDLIYASQDRPDDEKAGVKSLAVFLGDKLKACLTVLGALQIAFFAVAAFEASASSFLWVFGIAVWAISVPWSILSLNPRDRNSGGRIFLVNAILGIYLAAVSGTDVWLSSR.

8 helical membrane-spanning segments follow: residues 30 to 50 (HTPE…FYAI), 63 to 83 (FLGI…WNDI), 110 to 130 (AMVA…AMLG), 154 to 174 (IWAP…PPWV), 185 to 205 (LPAS…LIYA), 230 to 250 (ACLT…AFEA), 255 to 275 (FLWV…ILSL), and 286 to 306 (IFLV…TDVW).

This sequence belongs to the UbiA prenyltransferase family. Mg(2+) is required as a cofactor.

The protein localises to the membrane. Its pathway is secondary metabolite biosynthesis; terpenoid biosynthesis. Functionally, olyprenyl transferase; part of the gene cluster that mediates the biosynthesis of the meroterpenoids nectripenoids A and B, as well as cochliquninone D and isocochliquninone E. The pathway probably begins with the HR-PKS ntnH that catalyzes two chain-extension steps to form a reduced triketide, which then primes the SAT domain in the NR-PKS ntnG to initiate three more cycles of extension to give a linear hexaketide corresponding to the polyketide part of nectripenoids. The FAD-dependent monooxygenase ntnJ then performs an oxidative decarboxylation at C11 of the ntnH/ntnG product, via an electrophilic aromatic hydroxylation with concomitant ipso-decarboxylation. The membrane-bound polyprenyl transferase ntnF then introduces a farnesyl group before the FAD-dependent monooxygenase ntnK functions as the first epoxidase on terminal C12'-C13' olefin, followed by a second epoxidation on C7'-C8' catalyzed by ntnA. The terpene cyclase/mutase ntnI then initiates the sequential tricyclic ring formation through protonation of the terminal epoxide and catalyzes the regioselective and stereoselective 6/6/6-tricyclic ring formation. The cytochrome P450 monooxygenase ntnM may then hydroxylate C1'. The chain is Polyprenyl transferase ntnF from Nectria sp.